The following is a 420-amino-acid chain: MDALSVSEINAKIKALLEATFLQVRVQGEVSNLTIHKVSGHAYFSLKDSQSVIRCTLFRGNASKLKFALKEGQEVAVFGAISVYPPRGDYQINCFEIEPKDWGSLALALEQLKEKLRLKGYFDKENKLPKPSFPKRVAIITSQNSAAWADMQKIAFKRWPMCELVCINTLMQGEGCVQSVVESIAYADSFYNTRNAFDAIVVARGGGSMEDLYSFNDERIADALHLAKTFSMSAIGHESDFLLSDSVADLRASTPSNAMEILLPSSEEWQQKLDGFNLKLQRSFKILLHQKKVHLEHLAASLKRLSFENKHHLNSLKLEKLKIALENKTLEFLRLKKTLLEKISTQLSTSPFLQTKTERLNALDNALKLAHAHLKLPKFGAFVSKNNQAIELEELKIGDKIELNNEKARASAAILSVDKA.

This sequence belongs to the XseA family. Heterooligomer composed of large and small subunits.

It is found in the cytoplasm. The catalysed reaction is Exonucleolytic cleavage in either 5'- to 3'- or 3'- to 5'-direction to yield nucleoside 5'-phosphates.. Its function is as follows. Bidirectionally degrades single-stranded DNA into large acid-insoluble oligonucleotides, which are then degraded further into small acid-soluble oligonucleotides. The sequence is that of Exodeoxyribonuclease 7 large subunit from Helicobacter acinonychis (strain Sheeba).